A 128-amino-acid chain; its full sequence is Fluoride-specific ion channel FluC (128 aa).

A run of 4 helical transmembrane segments spans residues 5–25, 32–52, 70–90, and 106–126; these read ALVA…SMVI, TFPW…GLFA, FFMV…LQTL, and VGSV…ATII. Residues G77 and T80 each contribute to the Na(+) site.

Belongs to the fluoride channel Fluc/FEX (TC 1.A.43) family.

The protein localises to the cell inner membrane. The enzyme catalyses fluoride(in) = fluoride(out). With respect to regulation, na(+) is not transported, but it plays an essential structural role and its presence is essential for fluoride channel function. Functionally, fluoride-specific ion channel. Important for reducing fluoride concentration in the cell, thus reducing its toxicity. This chain is Fluoride-specific ion channel FluC, found in Paramagnetospirillum magneticum (strain ATCC 700264 / AMB-1) (Magnetospirillum magneticum).